The sequence spans 130 residues: Small ribosomal subunit protein uS11c (130 aa).

The protein belongs to the universal ribosomal protein uS11 family. As to quaternary structure, part of the 30S ribosomal subunit.

It localises to the plastid. Its subcellular location is the chloroplast. This Chlorella vulgaris (Green alga) protein is Small ribosomal subunit protein uS11c.